Here is an 895-residue protein sequence, read N- to C-terminus: Zinc finger protein 574 (895 aa).

C2H2-type zinc fingers lie at residues 16–38, 76–98, and 126–148; these read YVCSECNQLYGSLEEVLMHQNSH, YQCLECGQLLMSPSQLLEHQELH, and YECVDCKALFASQELWLNHRQTH. Phosphoserine is present on Ser-164. The segment at 214-236 adopts a C2H2-type 4 zinc-finger fold; sequence YKCSECSQLFQLPADFLEHQATH. The interval 239–301 is disordered; it reads APVPESQEPA…RARRNNSGEA (63 aa). Residues 247-257 show a composition bias toward polar residues; that stretch reads PALQQEVQASS. Residues 274-287 show a composition bias toward basic and acidic residues; it reads HSYELRNGEAIGRD. The residue at position 298 (Ser-298) is a Phosphoserine. 4 consecutive C2H2-type zinc fingers follow at residues 309–331, 336–358, 364–386, and 392–413; these read LFCSACDQLFLSPHQLQQHLRSH, FKCPLCSRVFPSPSSLDQHLGDH, FLCVDCGLAFGTEALLLAHRRAH, and HSCPCGKTFVNLTKFLYHRRTH. Residues 434–460 are disordered; the sequence is FPEPAPAETGEPEAPEPPVSEETSAGP. 6 consecutive C2H2-type zinc fingers follow at residues 466–489, 495–517, 523–545, 551–573, 579–601, and 607–630; these read YRCLLCSREFGKALQLTRHQRFVH, HKCSICGKMFKKKSHVRNHLRTH, FPCPDCSKPFNSPANLARHRLTH, YRCGDCGKAFTQSSTLRQHRLVH, YRCQECGVRFHRPYRLLMHRYHH, and YKCRECPRSFLLRRLLEVHQLVVH. The segment at 636–659 adopts a C2H2-type 15; degenerate zinc-finger fold; that stretch reads HRCPSCGAAFPSSLRLREHRCAAA. A C2H2-type 16 zinc finger spans residues 667–689; sequence FECGTCGKKVGSAARLQAHEAAH. The segment at 687–732 is disordered; the sequence is AAHAAAGPGEVLAKEPPAPRAPRATRAPVASPAALGGTATASPAPA. Residues 707–731 are compositionally biased toward low complexity; that stretch reads APRATRAPVASPAALGGTATASPAP. Ser-717 bears the Phosphoserine mark. A Phosphothreonine modification is found at Thr-724. Ser-728 carries the post-translational modification Phosphoserine. 4 C2H2-type zinc fingers span residues 737-759, 765-787, 793-815, and 821-843; these read LECSECKKLFSTETSLQVHRRIH, YPCPDCGKAFRQSTHLKDHRRLH, FACEVCGKAFAISMRLAEHRRIH, and YSCPDCGKSYRSFSNLWKHRKTH. Arg-831 carries the asymmetric dimethylarginine modification.

It belongs to the krueppel C2H2-type zinc-finger protein family.

It localises to the nucleus. May be involved in transcriptional regulation. This chain is Zinc finger protein 574 (ZNF574), found in Pongo abelii (Sumatran orangutan).